Here is a 421-residue protein sequence, read N- to C-terminus: 3-phosphoshikimate 1-carboxyvinyltransferase (421 aa).

Residues Lys20, Ser21, and Arg25 each contribute to the 3-phosphoshikimate site. Lys20 is a binding site for phosphoenolpyruvate. Residues Gly90 and Arg117 each coordinate phosphoenolpyruvate. 3-phosphoshikimate contacts are provided by Ser162, Ser163, Gln164, Ser190, Asp304, and Lys331. Gln164 provides a ligand contact to phosphoenolpyruvate. The Proton acceptor role is filled by Asp304. Phosphoenolpyruvate contacts are provided by Arg335 and Arg376.

Belongs to the EPSP synthase family. As to quaternary structure, monomer.

It localises to the cytoplasm. The enzyme catalyses 3-phosphoshikimate + phosphoenolpyruvate = 5-O-(1-carboxyvinyl)-3-phosphoshikimate + phosphate. It participates in metabolic intermediate biosynthesis; chorismate biosynthesis. Catalyzes the transfer of the enolpyruvyl moiety of phosphoenolpyruvate (PEP) to the 5-hydroxyl of shikimate-3-phosphate (S3P) to produce enolpyruvyl shikimate-3-phosphate and inorganic phosphate. This is 3-phosphoshikimate 1-carboxyvinyltransferase from Methanothrix thermoacetophila (strain DSM 6194 / JCM 14653 / NBRC 101360 / PT) (Methanosaeta thermophila).